Reading from the N-terminus, the 500-residue chain is L-arabinose isomerase (500 aa).

Positions 306, 333, 350, and 450 each coordinate Mn(2+).

It belongs to the arabinose isomerase family. As to quaternary structure, homohexamer. Mn(2+) is required as a cofactor.

It catalyses the reaction beta-L-arabinopyranose = L-ribulose. It participates in carbohydrate degradation; L-arabinose degradation via L-ribulose; D-xylulose 5-phosphate from L-arabinose (bacterial route): step 1/3. Functionally, catalyzes the conversion of L-arabinose to L-ribulose. The protein is L-arabinose isomerase of Yersinia pestis bv. Antiqua (strain Nepal516).